A 150-amino-acid polypeptide reads, in one-letter code: Photosystem II extrinsic protein V (150 aa).

A signal peptide spans 1-20 (MIRVIMLLVLVWMTPMISWA). Cysteine 50, cysteine 53, histidine 54, and histidine 105 together coordinate heme c.

Belongs to the cytochrome c family. PsbV subfamily. PSII is composed of 1 copy each of membrane proteins PsbA, PsbB, PsbC, PsbD, PsbE, PsbF, PsbH, PsbI, PsbJ, PsbK, PsbL, PsbM, PsbT, PsbY, PsbZ, Psb30/Ycf12, at least 3 peripheral proteins of the oxygen-evolving complex and a large number of cofactors. It forms dimeric complexes. The extrinsic subunits in red algae are PsbO (OEC33), PsbQ', cytochrome c-550 and PsbU. Heme c is required as a cofactor.

It is found in the plastid. The protein localises to the chloroplast thylakoid membrane. Its function is as follows. One of the extrinsic, lumenal subunits of photosystem II (PSII). PSII is a light-driven water plastoquinone oxidoreductase, using light energy to abstract electrons from H(2)O, generating a proton gradient subsequently used for ATP formation. The extrinsic proteins stabilize the structure of photosystem II oxygen-evolving complex (OEC), the ion environment of oxygen evolution and protect the OEC against heat-induced inactivation. The polypeptide is Photosystem II extrinsic protein V (Cyanidioschyzon merolae (strain NIES-3377 / 10D) (Unicellular red alga)).